The primary structure comprises 398 residues: Phosphoglycerate kinase (398 aa).

Substrate contacts are provided by residues 23–25 (DLN), Arg38, 61–64 (HFGR), Arg119, and Arg152. Residues Lys202, Glu324, and 354–357 (GGDT) contribute to the ATP site.

It belongs to the phosphoglycerate kinase family. Monomer.

It localises to the cytoplasm. It carries out the reaction (2R)-3-phosphoglycerate + ATP = (2R)-3-phospho-glyceroyl phosphate + ADP. Its pathway is carbohydrate degradation; glycolysis; pyruvate from D-glyceraldehyde 3-phosphate: step 2/5. This Bradyrhizobium diazoefficiens (strain JCM 10833 / BCRC 13528 / IAM 13628 / NBRC 14792 / USDA 110) protein is Phosphoglycerate kinase.